The primary structure comprises 102 residues: Large ribosomal subunit protein bL28 (102 aa).

Belongs to the bacterial ribosomal protein bL28 family.

The polypeptide is Large ribosomal subunit protein bL28 (Bradyrhizobium diazoefficiens (strain JCM 10833 / BCRC 13528 / IAM 13628 / NBRC 14792 / USDA 110)).